A 175-amino-acid polypeptide reads, in one-letter code: MKSSIFVACFITFIIFHSSQAQTPRENFLNAHNAARRRVGVGPMTWDDGLAAYAQNYANQRADDCGMIHSDGPYGENLAAAFPQLNAAGAVKMWDDEKQWYDYNSNTCAPGKVCGHYTQVVWRKSVRLGCARVRCNSGWVFITCNYDPPGNYIDNVYGDLEEQKPDFDSKLELPN.

The signal sequence occupies residues 1–21 (MKSSIFVACFITFIIFHSSQA). In terms of domain architecture, SCP spans 29 to 146 (LNAHNAARRR…SGWVFITCNY (118 aa)). 3 disulfides stabilise this stretch: Cys65-Cys135, Cys108-Cys114, and Cys130-Cys144.

Belongs to the CRISP family.

In terms of biological role, probably involved in the defense reaction of plants against pathogens. The chain is Pathogenesis-related protein 1A1 from Solanum lycopersicum (Tomato).